The following is a 242-amino-acid chain: Octanoyltransferase (242 aa).

Positions Ser-31–Gln-206 constitute a BPL/LPL catalytic domain. Substrate contacts are provided by residues Arg-70–His-77, Ser-137–Gly-139, and Gly-150–Ala-152. The active-site Acyl-thioester intermediate is the Cys-168.

The protein belongs to the LipB family.

It is found in the cytoplasm. It carries out the reaction octanoyl-[ACP] + L-lysyl-[protein] = N(6)-octanoyl-L-lysyl-[protein] + holo-[ACP] + H(+). The protein operates within protein modification; protein lipoylation via endogenous pathway; protein N(6)-(lipoyl)lysine from octanoyl-[acyl-carrier-protein]: step 1/2. In terms of biological role, catalyzes the transfer of endogenously produced octanoic acid from octanoyl-acyl-carrier-protein onto the lipoyl domains of lipoate-dependent enzymes. Lipoyl-ACP can also act as a substrate although octanoyl-ACP is likely to be the physiological substrate. The chain is Octanoyltransferase from Coxiella burnetii (strain RSA 493 / Nine Mile phase I).